A 1630-amino-acid polypeptide reads, in one-letter code: Merozoite surface protein 1 (1630 aa).

Positions 1-19 are cleaved as a signal peptide; the sequence is MKIIFFLCSFLFFIINTQC. The interval 60-113 is disordered; that stretch reads TKGASAQSGTSGTSGTSGPSGPSGTSPSSRSNTLPRSNTSSGASPPADASDSDA. A tripeptide SG(TP) repeat region spans residues 67–84; that stretch reads SGTSGTSGTSGPSGPSGT. The segment covering 67–88 has biased composition (low complexity); sequence SGTSGTSGTSGPSGPSGTSPSS. Residues 89-98 are compositionally biased toward polar residues; sequence RSNTLPRSNT. A glycan (N-linked (GlcNAc...) asparagine) is linked at N97. Over residues 99–108 the composition is skewed to low complexity; sequence SSGASPPADA. Residue N259 is glycosylated (N-linked (GlcNAc...) asparagine). The interval 680–755 is disordered; it reads KKNIKTEGQS…VPTPPAPVNN (76 aa). Polar residues-rich tracts occupy residues 685-695 and 702-713; these read TEGQSDNSEPS and GQATTKPGQQAG. Low complexity predominate over residues 721-732; that stretch reads VQAQAQEQKQAQ. Residues N755, N759, N774, and N835 are each glycosylated (N-linked (GlcNAc...) asparagine). Positions 884-906 are disordered; that stretch reads SMQPLSLTPQDKPEVSANDDTSH. Residues N911, N955, N1049, N1156, and N1165 are each glycosylated (N-linked (GlcNAc...) asparagine). The segment at 993–1107 is required for binding to host erythrocyte cell membrane; it reads QLSFDLYNKY…EESIQTEDNY (115 aa). The segment covering 1190–1203 has biased composition (polar residues); that stretch reads VSESGSDTLEQSQP. The segment at 1190–1220 is disordered; sequence VSESGSDTLEQSQPKKPASTHVGAESNTITT. N-linked (GlcNAc...) asparagine glycans are attached at residues N1436 and N1517. 2 EGF-like domains span residues 1521-1561 and 1562-1610; these read HQCV…VENP and NPTC…FCSS. 6 disulfide bridges follow: C1523–C1534, C1528–C1544, C1546–C1557, C1565–C1578, C1572–C1592, and C1594–C1608. S1609 carries GPI-anchor amidated serine lipidation. The propeptide at 1610–1630 is removed in mature form; that stretch reads SSNFLGISFLLILMLILYSFI.

Forms a complex composed of subunits p83, p30, p38, and p42 which remain non-covalently associated; the complex is formed at the merozoite surface prior to egress from host erythrocytes. Forms a complex composed of processed MSP1 subunits, MSP6 subunit p36 and MSP7; the complex is formed at the merozoite surface prior to egress from host erythrocytes. Within the complex, interacts (via subunit p38) with MSP6 subunit p36 and (via subunits p83, p30 and p38) with MSP7 (via subunit p22). Forms a complex composed of MSP1, MSP6, DBLMSP1 and DBLMSP2. Within the complex, interacts (via subunit p38) with DBLMSP1 and DBLMSP2. Forms a complex composed of MSP1, and rhoptry proteins RhopH3, RAP1 and CLAG9/RhopH3. Within the complex, interacts (via subunits p42 and p19) with RhopH3 (via C-terminus). Forms a complex composed of MSP1, MSP6, MSP7, MSP9 and MSP3; within the complex, MSP6 and MSP9 mediate the binding to the host erythrocyte. Interacts (via subunits p19 and p42) with MSP9; the interaction is direct; MSP1 subunits p19 or p42, and MSP9 form a co-ligand complex that interacts with host SLC4A1/Band 3 protein. May interact with PFD6. Interacts with host spectrin. In terms of assembly, interacts with host glycophorin GYPA in a sialic acid-independent manner. As to quaternary structure, interacts with host proinflammatory cytokine S100P; the interaction blocks S100P inflammatory and chemotactic activities. Interacts with host SLC4A1/Band 3 (via 5ABC region) on the host erythrocyte surface in a sialic acid-independent manner. Post-translationally, the p190 precursor is cleaved by SUB1 prior to merozoite egress into 4 subunits p83, p30, p38, and p42 which remain non-covalently associated. SUB1-mediated proteolytic cleavage occurs in an orderly manner; the first cleavage occurs at the p83/p30 site, followed by cleavage at the p30/p38 site, the last cleavage occurs at the p38/p42 site. The order of cleavage is essential for parasite viability. SUB1-mediated processing is essential for merozoite egress. In a second processing step during erythrocyte invasion, p42 is cleaved by SUB2 into p33 and p19; the latter remains attached to the merozoite surface via its GPI-anchor and stays on the surface during the subsequent ring stage.

The protein resides in the cell membrane. It localises to the secreted. The protein localises to the vacuole membrane. During the asexual blood stage, involved in merozoite egress from host erythrocytes possibly via its interaction with the host cytoskeleton protein spectrin resulting in the destabilization of the host cytoskeleton and thus leading to erythrocyte cell membrane rupture. Involved in the binding to host erythrocytes and is required for host erythrocyte invasion. Functionally, by binding to host proinflammatory cytokine S100P may interfere with host immune responses. Its function is as follows. Involved in merozoite invasion of host erythrocytes. May play a role in the biogenesis and/or function of the food vacuole during the intraerythrocytic development. The chain is Merozoite surface protein 1 from Plasmodium falciparum (isolate K1 / Thailand).